A 417-amino-acid polypeptide reads, in one-letter code: Serine hydroxymethyltransferase 2 (417 aa).

(6S)-5,6,7,8-tetrahydrofolate-binding positions include Leu121 and 125 to 127 (GHL). Lys229 is subject to N6-(pyridoxal phosphate)lysine. 354–356 (SPF) serves as a coordination point for (6S)-5,6,7,8-tetrahydrofolate.

This sequence belongs to the SHMT family. Homodimer. Pyridoxal 5'-phosphate is required as a cofactor.

It localises to the cytoplasm. The enzyme catalyses (6R)-5,10-methylene-5,6,7,8-tetrahydrofolate + glycine + H2O = (6S)-5,6,7,8-tetrahydrofolate + L-serine. Its pathway is one-carbon metabolism; tetrahydrofolate interconversion. It participates in amino-acid biosynthesis; glycine biosynthesis; glycine from L-serine: step 1/1. Its function is as follows. Catalyzes the reversible interconversion of serine and glycine with tetrahydrofolate (THF) serving as the one-carbon carrier. This reaction serves as the major source of one-carbon groups required for the biosynthesis of purines, thymidylate, methionine, and other important biomolecules. Also exhibits THF-independent aldolase activity toward beta-hydroxyamino acids, producing glycine and aldehydes, via a retro-aldol mechanism. The protein is Serine hydroxymethyltransferase 2 of Pseudomonas putida (strain ATCC 47054 / DSM 6125 / CFBP 8728 / NCIMB 11950 / KT2440).